Consider the following 307-residue polypeptide: Putative serine/threonine-protein phosphatase C22H10.04 (307 aa).

Asp-51, His-53, Asp-79, and Asn-111 together coordinate Mn(2+). His-112 (proton donor) is an active-site residue. Positions 161 and 236 each coordinate Mn(2+).

Belongs to the PPP phosphatase family. PP-X subfamily. Mn(2+) is required as a cofactor.

It catalyses the reaction O-phospho-L-seryl-[protein] + H2O = L-seryl-[protein] + phosphate. The catalysed reaction is O-phospho-L-threonyl-[protein] + H2O = L-threonyl-[protein] + phosphate. The polypeptide is Putative serine/threonine-protein phosphatase C22H10.04 (Schizosaccharomyces pombe (strain 972 / ATCC 24843) (Fission yeast)).